Reading from the N-terminus, the 339-residue chain is Ribosomal RNA large subunit methyltransferase F (339 aa).

Positions 1–26 are disordered; sequence MTAPSTPKPQRKKPKTATTAKPVVPR.

The protein belongs to the methyltransferase superfamily. METTL16/RlmF family.

The protein localises to the cytoplasm. The catalysed reaction is adenosine(1618) in 23S rRNA + S-adenosyl-L-methionine = N(6)-methyladenosine(1618) in 23S rRNA + S-adenosyl-L-homocysteine + H(+). Its function is as follows. Specifically methylates the adenine in position 1618 of 23S rRNA. The polypeptide is Ribosomal RNA large subunit methyltransferase F (Pseudomonas fluorescens (strain SBW25)).